Reading from the N-terminus, the 507-residue chain is FAD-linked oxidoreductase OXR1 (507 aa).

The first 21 residues, 1–21 (MTIKFASLILAGLGLGSGALG), serve as a signal peptide directing secretion. N-linked (GlcNAc...) asparagine glycans are attached at residues asparagine 34 and asparagine 65. The region spanning 73–245 (YAPPTFKVSV…VSATYKLKPL (173 aa)) is the FAD-binding PCMH-type domain. 2 N-linked (GlcNAc...) asparagine glycosylation sites follow: asparagine 263 and asparagine 288.

Belongs to the oxygen-dependent FAD-linked oxidoreductase family. Requires FAD as cofactor.

It catalyses the reaction dihydropyriculol + A = pyriculol + AH2. It carries out the reaction dihydropyriculariol + A = pyriculariol + AH2. It participates in polyketide biosynthesis. In terms of biological role, FAD-linked oxidoreductase; part of the gene cluster that mediates the biosynthesis of pyriculol and pyriculariol, two heptaketides that induce lesion formation upon application on rice leaves but are dispensable for pathogenicity. The highly reducing polyketide synthase synthesizes the heptaketide backbone of pyriculol and pyriculariol. Pyriculol and pyriculariol contain several hydroxyl moieties and double bonds, so it can be assumed that several reduction steps occur during biosynthesis. These reactions could be executed by PKS19 itself or partly by the tailoring enzymes OXR1, OXR2, RED1, RED2 or RED3, identified within the cluster. The FAD-linked oxidoreductase OXR1 is the only tailoring enzyme for which the function has been determined yet, and is involved in the oxidation of dihydropyriculol and dihydropyriculariol into pyriculol and pyriculariol, respectively. The protein is FAD-linked oxidoreductase OXR1 of Pyricularia oryzae (strain 70-15 / ATCC MYA-4617 / FGSC 8958) (Rice blast fungus).